The following is a 335-amino-acid chain: Glyceraldehyde-3-phosphate dehydrogenase 1 (335 aa).

Residues threonine 13 to isoleucine 14 and glycine 111 each bind NAD(+). Serine 140–asparagine 142 lines the D-glyceraldehyde 3-phosphate pocket. Cysteine 141 (nucleophile) is an active-site residue. Arginine 169 is a binding site for NAD(+). Residues threonine 171 and histidine 195 to glycine 196 contribute to the D-glyceraldehyde 3-phosphate site. Glutamine 300 is an NAD(+) binding site.

Belongs to the glyceraldehyde-3-phosphate dehydrogenase family. Homotetramer.

It is found in the cytoplasm. It catalyses the reaction D-glyceraldehyde 3-phosphate + phosphate + NADP(+) = (2R)-3-phospho-glyceroyl phosphate + NADPH + H(+). The enzyme catalyses D-glyceraldehyde 3-phosphate + phosphate + NAD(+) = (2R)-3-phospho-glyceroyl phosphate + NADH + H(+). Its pathway is carbohydrate degradation; glycolysis; pyruvate from D-glyceraldehyde 3-phosphate: step 1/5. This Methanosarcina acetivorans (strain ATCC 35395 / DSM 2834 / JCM 12185 / C2A) protein is Glyceraldehyde-3-phosphate dehydrogenase 1 (gapA).